We begin with the raw amino-acid sequence, 203 residues long: Small ribosomal subunit protein uS4c (203 aa).

In terms of domain architecture, S4 RNA-binding spans 91 to 154 (MRLDNIIFRL…KYESIISKNI (64 aa)).

Belongs to the universal ribosomal protein uS4 family. In terms of assembly, part of the 30S ribosomal subunit. Contacts protein S5. The interaction surface between S4 and S5 is involved in control of translational fidelity.

The protein resides in the plastid. Its subcellular location is the chloroplast. In terms of biological role, one of the primary rRNA binding proteins, it binds directly to 16S rRNA where it nucleates assembly of the body of the 30S subunit. Functionally, with S5 and S12 plays an important role in translational accuracy. This Lopidium struthiopteris (Moss) protein is Small ribosomal subunit protein uS4c (rps4).